Here is a 109-residue protein sequence, read N- to C-terminus: Fluoride-specific ion channel FluC 1 (109 aa).

Helical transmembrane passes span 21–41 (FYFK…GFFI), 52–72 (ILFS…HFLY), and 83–103 (LFIY…IGFQ).

It belongs to the fluoride channel Fluc/FEX (TC 1.A.43) family.

It localises to the cell inner membrane. The enzyme catalyses fluoride(in) = fluoride(out). Fluoride-specific ion channel. Important for reducing fluoride concentration in the cell, thus reducing its toxicity. This Prochlorococcus marinus subsp. pastoris (strain CCMP1986 / NIES-2087 / MED4) protein is Fluoride-specific ion channel FluC 1.